The primary structure comprises 888 residues: Leukocyte tyrosine kinase receptor (888 aa).

An N-terminal signal peptide occupies residues 1–16; sequence MGCSHRLLLWLGAAGT. Topologically, residues 17–421 are extracellular; that stretch reads ILCSNSEFQT…CMDLPTTASP (405 aa). Intrachain disulfides connect Cys-73–Cys-86 and Cys-168–Cys-179. A disordered region spans residues 226 to 294; that stretch reads LVAAGGGGRS…RSPREGAEGG (69 aa). A compositionally biased stretch (gly residues) spans 260-273; it reads GSGGRGGAAGGGSG. Residues Cys-297 and Cys-319 are joined by a disulfide bond. N-linked (GlcNAc...) asparagine glycans are attached at residues Asn-377 and Asn-409. The helical transmembrane segment at 422–446 threads the bilayer; the sequence is LILMGAVVAALALSLLMMCAVLILV. Over 447–888 the chain is Cytoplasmic; the sequence is NQKCQGLWGT…SSSSSIPGIQ (442 aa). The region spanning 506–782 is the Protein kinase domain; that stretch reads VTLLRALGHG…IQYCTQDPDV (277 aa). ATP contacts are provided by residues 512–520 and Lys-540; that span reads LGHGAFGEV. The Proton acceptor role is filled by Asp-639. Tyr-672 carries the post-translational modification Phosphotyrosine; by autocatalysis. Residues 857–888 are disordered; it reads TYGSWTPRGPQGEDTGIEHCNGSSSSSIPGIQ. Residues 877–888 show a composition bias toward polar residues; that stretch reads NGSSSSSIPGIQ.

This sequence belongs to the protein kinase superfamily. Tyr protein kinase family. Insulin receptor subfamily. Homodimer; homodimerizes following ligand-binding. Part of a complex including LTK, TNK2 and GRB2, in which GRB2 promotes LTK recruitment by TNK2. Phosphorylated at tyrosine residues by autocatalysis, which activates kinase activity. In terms of tissue distribution, subsets of lymphoid and neuronal cells.

It localises to the cell membrane. The protein localises to the endoplasmic reticulum. It catalyses the reaction L-tyrosyl-[protein] + ATP = O-phospho-L-tyrosyl-[protein] + ADP + H(+). Its activity is regulated as follows. Activated by ligand-binding, leading to homodimerization and autophosphorylation. In terms of biological role, receptor with a tyrosine-protein kinase activity. Following activation by ALKAL1 or ALKAL2 ligands at the cell surface, transduces an extracellular signal into an intracellular response. Ligand-binding to the extracellular domain induces tyrosine kinase activation, leading to activation of the mitogen-activated protein kinase (MAPK) pathway. Phosphorylates almost exclusively at the first tyrosine of the Y-x-x-x-Y-Y motif. The exact function of this protein is not known; studies with chimeric proteins demonstrate its ability to promote growth and specifically neurite outgrowth, and cell survival. Involved in regulation of the secretory pathway involving endoplasmic reticulum (ER) export sites (ERESs) and ER to Golgi transport. In Mus musculus (Mouse), this protein is Leukocyte tyrosine kinase receptor.